The sequence spans 359 residues: MKKIIHVDMDCFFAAVEMRDFPELRGKPIAVGGRSDRRGVISTCNYEARKFGVRSAMASAYALKLCPDLILVPGRMSVYKEVSAQIREVFARYTELIEPLSLDEAYLDVSDCTQHQGSATLIAEAIRREIFEVTGLTASAGIAPVKFLAKIASDLNKPNGQYVITPQMIPEFVKTLALIKIPGVGKVTAAKLETMGLITCADVQACSRQSLMERFGKFGGVLYDRAQGIDPRGISPHRERKSVGVETTLAKDIYTYEQCQAVMPQLIQELSGRISRSAKSRRIHKQVVKLKFDDFKQTTIEQRSDEVSVKLFYDLLKQALERRAGRGIRLLGVSVGLESEAVGAGLDEEVHGAQMDLGF.

The UmuC domain occupies 4–185 (IIHVDMDCFF…LALIKIPGVG (182 aa)). Mg(2+)-binding residues include Asp8 and Asp103. Glu104 is an active-site residue.

Belongs to the DNA polymerase type-Y family. As to quaternary structure, monomer. Requires Mg(2+) as cofactor.

It is found in the cytoplasm. The catalysed reaction is DNA(n) + a 2'-deoxyribonucleoside 5'-triphosphate = DNA(n+1) + diphosphate. Functionally, poorly processive, error-prone DNA polymerase involved in untargeted mutagenesis. Copies undamaged DNA at stalled replication forks, which arise in vivo from mismatched or misaligned primer ends. These misaligned primers can be extended by PolIV. Exhibits no 3'-5' exonuclease (proofreading) activity. May be involved in translesional synthesis, in conjunction with the beta clamp from PolIII. The sequence is that of DNA polymerase IV from Shewanella loihica (strain ATCC BAA-1088 / PV-4).